The sequence spans 345 residues: Dihydroorotase (345 aa).

Positions 13 and 15 each coordinate Zn(2+). Substrate-binding positions include 15-17 and asparagine 41; that span reads HFR. Residues lysine 98, histidine 135, and histidine 173 each coordinate Zn(2+). Residue lysine 98 is modified to N6-carboxylysine. Position 135 (histidine 135) interacts with substrate. Position 218 (leucine 218) interacts with substrate. Residue aspartate 246 participates in Zn(2+) binding. Aspartate 246 is a catalytic residue. 2 residues coordinate substrate: histidine 250 and alanine 262.

Belongs to the metallo-dependent hydrolases superfamily. DHOase family. Class II DHOase subfamily. In terms of assembly, homodimer. Zn(2+) is required as a cofactor.

It catalyses the reaction (S)-dihydroorotate + H2O = N-carbamoyl-L-aspartate + H(+). The protein operates within pyrimidine metabolism; UMP biosynthesis via de novo pathway; (S)-dihydroorotate from bicarbonate: step 3/3. Functionally, catalyzes the reversible cyclization of carbamoyl aspartate to dihydroorotate. The protein is Dihydroorotase of Shewanella piezotolerans (strain WP3 / JCM 13877).